The following is a 216-amino-acid chain: Molybdenum cofactor guanylyltransferase (216 aa).

GTP is bound by residues 16-18 (LAG), Lys-28, Asn-57, Asp-73, and Asp-108. Asp-108 contributes to the Mg(2+) binding site.

The protein belongs to the MobA family. As to quaternary structure, monomer. Mg(2+) serves as cofactor.

It localises to the cytoplasm. The catalysed reaction is Mo-molybdopterin + GTP + H(+) = Mo-molybdopterin guanine dinucleotide + diphosphate. Its function is as follows. Transfers a GMP moiety from GTP to Mo-molybdopterin (Mo-MPT) cofactor (Moco or molybdenum cofactor) to form Mo-molybdopterin guanine dinucleotide (Mo-MGD) cofactor. The sequence is that of Molybdenum cofactor guanylyltransferase from Rhizobium rhizogenes (strain K84 / ATCC BAA-868) (Agrobacterium radiobacter).